Here is a 485-residue protein sequence, read N- to C-terminus: Glycogen synthase (485 aa).

ADP-alpha-D-glucose is bound at residue K18.

It belongs to the glycosyltransferase 1 family. Bacterial/plant glycogen synthase subfamily.

It catalyses the reaction [(1-&gt;4)-alpha-D-glucosyl](n) + ADP-alpha-D-glucose = [(1-&gt;4)-alpha-D-glucosyl](n+1) + ADP + H(+). It functions in the pathway glycan biosynthesis; glycogen biosynthesis. In terms of biological role, synthesizes alpha-1,4-glucan chains using ADP-glucose. This chain is Glycogen synthase, found in Dechloromonas aromatica (strain RCB).